The primary structure comprises 251 residues: Probable transcriptional regulatory protein SYNPCC7002_A0851 (251 aa).

Residues 20-141 (RILVVEDEAV…ELVARCRALL (122 aa)) enclose the Response regulatory domain. Asp76 is subject to 4-aspartylphosphate. A DNA-binding region (ompR/PhoB-type) is located at residues 153–251 (NSVRQFKDIS…TVRGFGYRFG (99 aa)).

In terms of processing, phosphorylation.

In Picosynechococcus sp. (strain ATCC 27264 / PCC 7002 / PR-6) (Agmenellum quadruplicatum), this protein is Probable transcriptional regulatory protein SYNPCC7002_A0851.